Here is a 555-residue protein sequence, read N- to C-terminus: Wee1-like protein kinase 2-A (555 aa).

Disordered regions lie at residues 1–81 (MRTA…SVGA) and 149–175 (FTPE…DCRT). Polar residues predominate over residues 38–48 (SPVSSWRTNNC). Low complexity predominate over residues 68-78 (SPSSDYSPDPS). A compositionally biased stretch (polar residues) spans 149–160 (FTPESYRQTHFQ). Residues 210–480 (FLEIEKIGAG…AASLAKNSVL (271 aa)) form the Protein kinase domain. ATP contacts are provided by residues 216–224 (IGAGEFGSV) and lysine 239. Aspartate 337 serves as the catalytic Proton acceptor. Positions 342 and 374 each coordinate Mg(2+). Residues 487–513 (AAQLQKQLNVEKFKTAMLERELKAAKL) are a coiled coil. Serine 549 is modified (phosphoserine).

This sequence belongs to the protein kinase superfamily. Ser/Thr protein kinase family. WEE1 subfamily. As to quaternary structure, interacts with prmt5; this promotes protesomal degradation of wee2-a in the nucleus. The interaction with prmt5 is disrupted upon activation of the DNA replication checkpoint. Subject to proteasomal degradation in the nucleus. In terms of tissue distribution, detected in egg (at protein level). Oocyte-specific maternally supplied protein. Present in immature and mature oocytes and in early (pregastrula) embryos, but not in post-gastrula embryos.

It localises to the nucleus. It is found in the cytoplasm. Its subcellular location is the cytosol. It carries out the reaction L-tyrosyl-[protein] + ATP = O-phospho-L-tyrosyl-[protein] + ADP + H(+). Oocyte-specific protein tyrosine kinase that phosphorylates and inhibits cdk1 and acts as a key regulator of meiosis. Required to maintain meiotic arrest in oocytes by phosphorylating cdk1 at 'Tyr-15', which inhibits cdk1 activity and prevents meiotic reentry. Negative regulator of mitosis. Involved in the mitotic DNA replication checkpoint. The chain is Wee1-like protein kinase 2-A (wee2-a) from Xenopus laevis (African clawed frog).